The primary structure comprises 334 residues: Biotin synthase (334 aa).

A Radical SAM core domain is found at 41 to 260; it reads TRLETASLLS…IAVARIMMPR (220 aa). [4Fe-4S] cluster-binding residues include Cys56, Cys60, and Cys63. [2Fe-2S] cluster-binding residues include Cys100, Cys131, Cys191, and Arg264.

Belongs to the radical SAM superfamily. Biotin synthase family. In terms of assembly, homodimer. The cofactor is [4Fe-4S] cluster. [2Fe-2S] cluster is required as a cofactor.

It catalyses the reaction (4R,5S)-dethiobiotin + (sulfur carrier)-SH + 2 reduced [2Fe-2S]-[ferredoxin] + 2 S-adenosyl-L-methionine = (sulfur carrier)-H + biotin + 2 5'-deoxyadenosine + 2 L-methionine + 2 oxidized [2Fe-2S]-[ferredoxin]. It functions in the pathway cofactor biosynthesis; biotin biosynthesis; biotin from 7,8-diaminononanoate: step 2/2. Functionally, catalyzes the conversion of dethiobiotin (DTB) to biotin by the insertion of a sulfur atom into dethiobiotin via a radical-based mechanism. The polypeptide is Biotin synthase (Bradyrhizobium sp. (strain ORS 278)).